We begin with the raw amino-acid sequence, 227 residues long: 7-cyano-7-deazaguanine synthase (227 aa).

7-17 (VSGGMDSLVAT) contacts ATP. Zn(2+) contacts are provided by C187, C195, C198, and C201.

The protein belongs to the QueC family. It depends on Zn(2+) as a cofactor.

The enzyme catalyses 7-carboxy-7-deazaguanine + NH4(+) + ATP = 7-cyano-7-deazaguanine + ADP + phosphate + H2O + H(+). The protein operates within purine metabolism; 7-cyano-7-deazaguanine biosynthesis. Catalyzes the ATP-dependent conversion of 7-carboxy-7-deazaguanine (CDG) to 7-cyano-7-deazaguanine (preQ(0)). This is 7-cyano-7-deazaguanine synthase from Chlorobaculum tepidum (strain ATCC 49652 / DSM 12025 / NBRC 103806 / TLS) (Chlorobium tepidum).